The chain runs to 503 residues: WAS/WASL-interacting protein family member 1 (503 aa).

Pro residues predominate over residues 1–14; it reads MPVPPPPAPPPPPT. The segment at 1–503 is disordered; that stretch reads MPVPPPPAPP…GAPPLPPIPR (503 aa). A compositionally biased stretch (polar residues) spans 21 to 31; sequence EKPTLNKTEQA. In terms of domain architecture, WH2 spans 32–49; sequence GRNALLSDISKGKKLKKT. Arginine 33 is subject to Asymmetric dimethylarginine. Residues 45 to 48 form a binds actin region; the sequence is KLKK. Over residues 65 to 104 the composition is skewed to gly residues; sequence AGAGGGGGGFGGGGGFGGGGGGGGGGSFGGGGPPGLGGLF. A compositionally biased stretch (low complexity) spans 121 to 137; that stretch reads SGGSRPPLLPPGGRSTS. 2 positions are modified to omega-N-methylarginine: arginine 125 and arginine 134. 4 stretches are compositionally biased toward pro residues: residues 141 to 154, 161 to 174, 182 to 191, and 204 to 223; these read FSPP…PVPS, PPEP…PPRP, SIPPPVPSTP, and PPVP…PPFP. Serine 142 is modified (phosphoserine). Residue serine 234 is modified to Phosphoserine. Low complexity predominate over residues 238–247; that stretch reads SPLSSSSPFS. Pro residues-rich tracts occupy residues 282-298 and 306-323; these read VPPP…PSTP and APPP…PLPP. Serine 340 carries the post-translational modification Phosphoserine. Threonine 345 is subject to Phosphothreonine. Residues 346 to 371 show a composition bias toward pro residues; that stretch reads PPLPSPGRSGPLPPPPSERPPPPVRD. Position 350 is a phosphoserine (serine 350). XRSGPXPPXP motif repeat units follow at residues 352–361, 374–383, and 410–419; these read GRSGPLPPPP and PRSGPRPPLP. Residues 413-434 show a composition bias toward pro residues; sequence GPRPPLPPDRPSAGAPPPPPPS. Over residues 480–494 the composition is skewed to basic and acidic residues; the sequence is ARNESRSGSNRRERG.

This sequence belongs to the verprolin family. In terms of assembly, binds to WAS, profilin and actin. Binds to WASL. Interacts with DBNL. Interacts with FNBP1L (via the SH3 domain). Highly expressed in peripheral blood mononuclear cells, spleen, placenta, small intestine, colon and thymus. Lower expression in ovary, heart, brain, lung, liver, skeletal muscle, kidney, pancreas, prostate and testis.

The protein resides in the cytoplasmic vesicle. It localises to the cytoplasm. The protein localises to the cytoskeleton. Its subcellular location is the cell projection. It is found in the ruffle. Its function is as follows. Plays a role in the reorganization of the actin cytoskeleton. Contributes with NCK1 and GRB2 in the recruitment and activation of WASL. May participate in regulating the subcellular localization of WASL, resulting in the disassembly of stress fibers in favor of filopodia formation. Plays a role in the formation of cell ruffles. Plays an important role in the intracellular motility of vaccinia virus by functioning as an adapter for recruiting WASL to vaccinia virus. The protein is WAS/WASL-interacting protein family member 1 (WIPF1) of Homo sapiens (Human).